A 381-amino-acid polypeptide reads, in one-letter code: ATP synthase subunit a (381 aa).

The interval 24 to 73 is disordered; it reads PVAAPVEQHGQAPEAAPDAHGSPAGEPGAAVEAHAAAAEHGEAAGHEGGH. The segment covering 47–59 has biased composition (low complexity); the sequence is AGEPGAAVEAHAA. A compositionally biased stretch (basic and acidic residues) spans 60 to 73; that stretch reads AAEHGEAAGHEGGH. 6 helical membrane-spanning segments follow: residues 128–148, 190–210, 215–235, 255–275, 290–310, and 316–336; these read KHVV…LGAV, LVTA…PFSA, NLSV…YAAI, LAPL…TKPF, FVIL…VAFG, and LSIF…FTML. The span at 351-360 shows a compositional bias: basic and acidic residues; sequence DHGHAEEHGH. Positions 351–381 are disordered; sequence DHGHAEEHGHAGPAAGSEHGSHVAGASPGHG.

It belongs to the ATPase A chain family. In terms of assembly, F-type ATPases have 2 components, CF(1) - the catalytic core - and CF(0) - the membrane proton channel. CF(1) has five subunits: alpha(3), beta(3), gamma(1), delta(1), epsilon(1). CF(0) has three main subunits: a(1), b(2) and c(9-12). The alpha and beta chains form an alternating ring which encloses part of the gamma chain. CF(1) is attached to CF(0) by a central stalk formed by the gamma and epsilon chains, while a peripheral stalk is formed by the delta and b chains.

It is found in the cell inner membrane. In terms of biological role, key component of the proton channel; it plays a direct role in the translocation of protons across the membrane. The chain is ATP synthase subunit a from Anaeromyxobacter dehalogenans (strain 2CP-C).